The sequence spans 438 residues: Na(+)/H(+) antiporter NhaA (438 aa).

11 consecutive transmembrane segments (helical) span residues 23–43 (FGGIFLFLNAVLAMVVANSFL), 62–82 (FFIGFSLHNWIDDVLMALFFL), 104–124 (SFPVIAALGGMIAPGLIYFFL), 133–153 (GFGIPMATDIAFALGVIMLLG), 162–182 (VFLITLAVADDLGAIVVIALF), 185–205 (TNLKFAWLLGALGVVLILAVL), 212–232 (SLIPYLLLGVLLWFCVHQSGI), 302–322 (FLAPISGYFIMPLFAFANAGV), 337–357 (LGVILGLCLGKPLGIFLITFI), 372–392 (WWHILGAGLLAGIGFTMSMFI), and 410–430 (IAILLGSLISGIIGALYLFVL).

It belongs to the NhaA Na(+)/H(+) (TC 2.A.33) antiporter family.

Its subcellular location is the cell inner membrane. It catalyses the reaction Na(+)(in) + 2 H(+)(out) = Na(+)(out) + 2 H(+)(in). Functionally, na(+)/H(+) antiporter that extrudes sodium in exchange for external protons. The chain is Na(+)/H(+) antiporter NhaA from Helicobacter pylori (strain G27).